A 370-amino-acid polypeptide reads, in one-letter code: Putative agmatine deiminase (370 aa).

The Amidino-cysteine intermediate role is filled by C361.

The protein belongs to the agmatine deiminase family.

It catalyses the reaction agmatine + H2O = N-carbamoylputrescine + NH4(+). This chain is Putative agmatine deiminase, found in Shewanella baltica (strain OS195).